Consider the following 168-residue polypeptide: NADH dehydrogenase [ubiquinone] 1 alpha subcomplex assembly factor 2 (168 aa).

Residues Gly-112 to Gln-168 are disordered. At Ser-133 the chain carries Phosphoserine. Polar residues predominate over residues Ala-145 to Ser-157.

This sequence belongs to the complex I NDUFA12 subunit family. As to quaternary structure, interacts with ARMC9.

It localises to the mitochondrion. Acts as a molecular chaperone for mitochondrial complex I assembly. Complex I functions in the transfer of electrons from NADH to the respiratory chain. The immediate electron acceptor for the enzyme is believed to be ubiquinone. Is involved in the initial steps of cilia formation, including removal of CP110 from the mother centrioles, docking of membrane vesicles to the mother centrioles, and establishment of the transition zone. The chain is NADH dehydrogenase [ubiquinone] 1 alpha subcomplex assembly factor 2 (Ndufaf2) from Mus musculus (Mouse).